A 481-amino-acid polypeptide reads, in one-letter code: Aspartyl/glutamyl-tRNA(Asn/Gln) amidotransferase subunit B (481 aa).

This sequence belongs to the GatB/GatE family. GatB subfamily. In terms of assembly, heterotrimer of A, B and C subunits.

The catalysed reaction is L-glutamyl-tRNA(Gln) + L-glutamine + ATP + H2O = L-glutaminyl-tRNA(Gln) + L-glutamate + ADP + phosphate + H(+). It carries out the reaction L-aspartyl-tRNA(Asn) + L-glutamine + ATP + H2O = L-asparaginyl-tRNA(Asn) + L-glutamate + ADP + phosphate + 2 H(+). Its function is as follows. Allows the formation of correctly charged Asn-tRNA(Asn) or Gln-tRNA(Gln) through the transamidation of misacylated Asp-tRNA(Asn) or Glu-tRNA(Gln) in organisms which lack either or both of asparaginyl-tRNA or glutaminyl-tRNA synthetases. The reaction takes place in the presence of glutamine and ATP through an activated phospho-Asp-tRNA(Asn) or phospho-Glu-tRNA(Gln). The sequence is that of Aspartyl/glutamyl-tRNA(Asn/Gln) amidotransferase subunit B from Pseudomonas putida (strain ATCC 47054 / DSM 6125 / CFBP 8728 / NCIMB 11950 / KT2440).